We begin with the raw amino-acid sequence, 271 residues long: 3-methyl-2-oxobutanoate hydroxymethyltransferase (271 aa).

Residues Asp51 and Asp90 each coordinate Mg(2+). Residues 51–52, Asp90, and Lys119 contribute to the 3-methyl-2-oxobutanoate site; that span reads DS. Residue Glu121 participates in Mg(2+) binding. Glu188 serves as the catalytic Proton acceptor.

Belongs to the PanB family. As to quaternary structure, homodecamer; pentamer of dimers. It depends on Mg(2+) as a cofactor.

Its subcellular location is the cytoplasm. It catalyses the reaction 3-methyl-2-oxobutanoate + (6R)-5,10-methylene-5,6,7,8-tetrahydrofolate + H2O = 2-dehydropantoate + (6S)-5,6,7,8-tetrahydrofolate. The protein operates within cofactor biosynthesis; (R)-pantothenate biosynthesis; (R)-pantoate from 3-methyl-2-oxobutanoate: step 1/2. Catalyzes the reversible reaction in which hydroxymethyl group from 5,10-methylenetetrahydrofolate is transferred onto alpha-ketoisovalerate to form ketopantoate. The protein is 3-methyl-2-oxobutanoate hydroxymethyltransferase of Azoarcus sp. (strain BH72).